Consider the following 348-residue polypeptide: Mycothiol acetyltransferase (348 aa).

N-acetyltransferase domains are found at residues 12-156 (TSMR…VDVT) and 169-330 (VAVR…HGTP). Glutamate 44 contacts 1D-myo-inositol 2-(L-cysteinylamino)-2-deoxy-alpha-D-glucopyranoside. 91 to 93 (LVV) serves as a coordination point for acetyl-CoA. 1D-myo-inositol 2-(L-cysteinylamino)-2-deoxy-alpha-D-glucopyranoside is bound by residues glutamate 196, lysine 235, and glutamate 253. Residues 257–259 (VGV) and 264–270 (QGLGMGR) each bind acetyl-CoA. Tyrosine 291 contacts 1D-myo-inositol 2-(L-cysteinylamino)-2-deoxy-alpha-D-glucopyranoside. Position 296–301 (296–301 (NTVAVH)) interacts with acetyl-CoA. Positions 320–348 (PPAGSPAHGTPLVRVTDTPSSPGDATMGS) are disordered. The span at 336-348 (DTPSSPGDATMGS) shows a compositional bias: polar residues.

This sequence belongs to the acetyltransferase family. MshD subfamily. Monomer.

The enzyme catalyses 1D-myo-inositol 2-(L-cysteinylamino)-2-deoxy-alpha-D-glucopyranoside + acetyl-CoA = mycothiol + CoA + H(+). In terms of biological role, catalyzes the transfer of acetyl from acetyl-CoA to desacetylmycothiol (Cys-GlcN-Ins) to form mycothiol. This is Mycothiol acetyltransferase from Cellulomonas flavigena (strain ATCC 482 / DSM 20109 / BCRC 11376 / JCM 18109 / NBRC 3775 / NCIMB 8073 / NRS 134).